We begin with the raw amino-acid sequence, 217 residues long: Peptide methionine sulfoxide reductase MsrA (217 aa).

C54 is an active-site residue.

It belongs to the MsrA Met sulfoxide reductase family.

It carries out the reaction L-methionyl-[protein] + [thioredoxin]-disulfide + H2O = L-methionyl-(S)-S-oxide-[protein] + [thioredoxin]-dithiol. It catalyses the reaction [thioredoxin]-disulfide + L-methionine + H2O = L-methionine (S)-S-oxide + [thioredoxin]-dithiol. In terms of biological role, has an important function as a repair enzyme for proteins that have been inactivated by oxidation. Catalyzes the reversible oxidation-reduction of methionine sulfoxide in proteins to methionine. The protein is Peptide methionine sulfoxide reductase MsrA of Maricaulis maris (strain MCS10) (Caulobacter maris).